The primary structure comprises 85 residues: F(1)-ATPase inhibitor IF(1), mitochondrial (85 aa).

The N-terminal 22 residues, 1–22 (MLPRSALARSLQLQRGVAARFY), are a transit peptide targeting the mitochondrion. Positions 41–84 (KRERATEDFFVRQREKEQLRHLKEQLEKQRKKIDSLENKIDSMT) form a coiled coil.

It belongs to the ATPase inhibitor family. Monomer and homodimer. The protein aggregates less strongly with increasing pH.

Its subcellular location is the mitochondrion. In terms of biological role, endogenous ATPase inhibitor, which inhibits specifically the reverse ATPase reaction of mitochondrial F(1)F(0)-type ATP synthase. It limits ATP depletion when the mitochondrial membrane potential falls below a threshold and the F(1)F(0)-ATP synthase starts hydrolyzing ATP to pump protons out of the mitochondrial matrix. Required to avoid the consumption of cellular ATP when the F(1)F(0)-ATP synthase enzyme acts as an ATP hydrolase. Functions through inserting its N-terminal part into the catalytically active F1-ATPase, thereby blocking its rotational movement and subsequently the ATP hydrolase activity. This Saccharomyces cerevisiae (strain ATCC 204508 / S288c) (Baker's yeast) protein is F(1)-ATPase inhibitor IF(1), mitochondrial (INH1).